The sequence spans 341 residues: uncharacterized protein (341 aa).

4 helical membrane-spanning segments follow: residues 8-28 (LMLT…PLII), 63-83 (LMYF…VFAL), 171-191 (IYIM…IALS), and 317-337 (EFLV…KIFL). Positions 101-305 (DIVIVLDISP…SKKENLERKI (205 aa)) constitute a VWFA domain.

The protein resides in the cell membrane. This is an uncharacterized protein from Borreliella burgdorferi (strain ATCC 35210 / DSM 4680 / CIP 102532 / B31) (Borrelia burgdorferi).